The primary structure comprises 125 residues: Small ribosomal subunit protein uS12 (125 aa).

Asp89 carries the 3-methylthioaspartic acid modification.

Belongs to the universal ribosomal protein uS12 family. Part of the 30S ribosomal subunit. Contacts proteins S8 and S17. May interact with IF1 in the 30S initiation complex.

With S4 and S5 plays an important role in translational accuracy. Functionally, interacts with and stabilizes bases of the 16S rRNA that are involved in tRNA selection in the A site and with the mRNA backbone. Located at the interface of the 30S and 50S subunits, it traverses the body of the 30S subunit contacting proteins on the other side and probably holding the rRNA structure together. The combined cluster of proteins S8, S12 and S17 appears to hold together the shoulder and platform of the 30S subunit. This Cupriavidus necator (strain ATCC 17699 / DSM 428 / KCTC 22496 / NCIMB 10442 / H16 / Stanier 337) (Ralstonia eutropha) protein is Small ribosomal subunit protein uS12.